A 1088-amino-acid chain; its full sequence is RNA-directed RNA polymerase (1088 aa).

The RdRp catalytic domain maps to 501–687 (LSYGDVTRFL…AKRYIAGGKI (187 aa)).

This sequence belongs to the reoviridae RNA-directed RNA polymerase family. In terms of assembly, interacts with VP3 (Potential). Interacts with VP2; this interaction activates VP1. Interacts with NSP5; this interaction is probably necessary for the formation of functional virus factories. Interacts with NSP2; this interaction is weak. Mg(2+) is required as a cofactor.

The protein resides in the virion. The enzyme catalyses RNA(n) + a ribonucleoside 5'-triphosphate = RNA(n+1) + diphosphate. In terms of biological role, RNA-directed RNA polymerase that is involved in both transcription and genome replication. Together with VP3 capping enzyme, forms an enzyme complex positioned near the channels situated at each of the five-fold vertices of the core. Following infection, the outermost layer of the virus is lost, leaving a double-layered particle (DLP) made up of the core and VP6 shell. VP1 then catalyzes the transcription of fully conservative plus-strand genomic RNAs that are extruded through the DLP's channels into the cytoplasm where they function as mRNAs for translation of viral proteins. One copy of each of the viral (+)RNAs is also recruited during core assembly, together with newly synthesized polymerase complexes and VP2. The polymerase of these novo-formed particles catalyzes the synthesis of complementary minus-strands leading to dsRNA formation. To do so, the polymerase specifically recognizes and binds 4 bases 5'-UGUG-3' in the conserved 3'-sequence of plus-strand RNA templates. VP2 presumably activates the autoinhibited VP1-RNA complex to coordinate packaging and genome replication. Once dsRNA synthesis is complete, the polymerase switches to the transcriptional mode, thus providing secondary transcription. In Bos taurus (Bovine), this protein is RNA-directed RNA polymerase.